We begin with the raw amino-acid sequence, 411 residues long: Argininosuccinate synthase (411 aa).

11-19 is an ATP binding site; the sequence is AYSGGLDTS. Tyr88 is an L-citrulline binding site. Gly118 serves as a coordination point for ATP. Positions 120, 124, and 125 each coordinate L-aspartate. Asn124 provides a ligand contact to L-citrulline. L-citrulline is bound by residues Arg128, Ser176, Glu261, and Tyr273.

It belongs to the argininosuccinate synthase family. Type 1 subfamily. Homotetramer.

Its subcellular location is the cytoplasm. The catalysed reaction is L-citrulline + L-aspartate + ATP = 2-(N(omega)-L-arginino)succinate + AMP + diphosphate + H(+). It participates in amino-acid biosynthesis; L-arginine biosynthesis; L-arginine from L-ornithine and carbamoyl phosphate: step 2/3. The polypeptide is Argininosuccinate synthase (Lactiplantibacillus plantarum (strain ATCC BAA-793 / NCIMB 8826 / WCFS1) (Lactobacillus plantarum)).